A 738-amino-acid polypeptide reads, in one-letter code: Leucine-rich repeat flightless-interacting protein 1 (738 aa).

An N-acetylthreonine modification is found at threonine 2. Serine 16 carries the phosphoserine modification. Positions 40–65 (IRMKELERQQKEVEERPDKDFAEKGS) are enriched in basic and acidic residues. The segment at 40 to 98 (IRMKELERQQKEVEERPDKDFAEKGSRNMPSLSAATLASLGGTSSRRGSGDTSISMDTE) is disordered. The span at 78 to 94 (SLGGTSSRRGSGDTSIS) shows a compositional bias: low complexity. Phosphoserine is present on residues serine 83, serine 84, serine 88, and serine 92. The stretch at 94 to 194 (SMDTEASIRE…LRQREEMLEK (101 aa)) forms a coiled coil. Residue lysine 249 forms a Glycyl lysine isopeptide (Lys-Gly) (interchain with G-Cter in SUMO1) linkage. Composition is skewed to basic and acidic residues over residues 253–262 (VEKVGQRETL) and 277–297 (DCVD…RPVE). The interval 253 to 738 (VEKVGQRETL…SKSKEDCTMS (486 aa)) is disordered. Position 302 is a phosphoserine (serine 302). The segment covering 314–326 (EVQSQDQENTSIL) has biased composition (polar residues). A compositionally biased stretch (basic and acidic residues) spans 330-347 (EQIESHEVTNKSDSRDSN). Serine 346 and serine 348 each carry phosphoserine. A compositionally biased stretch (polar residues) spans 371–380 (KNQSENSMDS). Composition is skewed to basic and acidic residues over residues 381-400 (QGKE…RPDH) and 467-476 (SERELAHEAA). A DNA-binding region spans residues 479-580 (EEALTQSSQA…KNKKKKAAAP (102 aa)). 2 stretches are compositionally biased toward polar residues: residues 483-495 (TQSS…NTVT) and 520-534 (TVQS…PGST). A compositionally biased stretch (basic and acidic residues) spans 535–553 (DTKHTSPHAKERNKAKSEQ). 2 positions are modified to phosphoserine: serine 551 and serine 560. A compositionally biased stretch (basic residues) spans 563–577 (KKTKNKKKKNKKKKA). A compositionally biased stretch (basic and acidic residues) spans 606-626 (RVQATDKKWAAETPELKEDPQ). 2 positions are modified to phosphoserine: serine 675 and serine 701. Composition is skewed to basic and acidic residues over residues 691-703 (QADE…HSVD) and 720-738 (EQAR…CTMS).

The protein belongs to the LRRFIP family. As to quaternary structure, homodimer. May also form higher oligomers. Interacts with FLII. Interacts with MYD88. Competes with FLII for MyD88-binding, even in the absence of LPS.

Its subcellular location is the nucleus. It localises to the cytoplasm. Its function is as follows. Transcriptional repressor which preferentially binds to the GC-rich consensus sequence (5'-AGCCCCCGGCG-3') and may regulate expression of TNF, EGFR and PDGFA. May control smooth muscle cells proliferation following artery injury through PDGFA repression. May also bind double-stranded RNA. Positively regulates Toll-like receptor (TLR) signaling in response to agonist probably by competing with the negative FLII regulator for MYD88-binding. The protein is Leucine-rich repeat flightless-interacting protein 1 (Lrrfip1) of Rattus norvegicus (Rat).